Reading from the N-terminus, the 60-residue chain is Small ribosomal subunit protein bS21 (60 aa).

Residues 41–60 (PEEKRKRKAIARRRQRSRRR) are disordered. Residues 45–60 (RKRKAIARRRQRSRRR) show a composition bias toward basic residues.

Belongs to the bacterial ribosomal protein bS21 family.

This Gloeothece citriformis (strain PCC 7424) (Cyanothece sp. (strain PCC 7424)) protein is Small ribosomal subunit protein bS21.